A 359-amino-acid polypeptide reads, in one-letter code: Large ribosomal subunit protein bL27m (359 aa).

The transit peptide at 1–24 directs the protein to the mitochondrion; the sequence is MSFWKVATLWQMPLRPSILVQVRT. The tract at residues 29-48 is disordered; that stretch reads AAGSRTSMKDSAGRRLGPKK. Basic and acidic residues predominate over residues 35 to 48; it reads SMKDSAGRRLGPKK.

It belongs to the bacterial ribosomal protein bL27 family.

The protein localises to the mitochondrion. In terms of biological role, component of the large subunit of mitochondrial ribosome. The chain is Large ribosomal subunit protein bL27m (MRPL2) from Eremothecium gossypii (strain ATCC 10895 / CBS 109.51 / FGSC 9923 / NRRL Y-1056) (Yeast).